Here is a 210-residue protein sequence, read N- to C-terminus: Oxygen-insensitive NADPH nitroreductase (210 aa).

150 to 155 is a binding site for NADP(+); it reads GVSLMG.

The protein belongs to the nitroreductase family.

Its function is as follows. Reduction of a variety of nitroaromatic compounds using NADPH as source of reducing equivalents; two electrons are transferred. The chain is Oxygen-insensitive NADPH nitroreductase (rdxA) from Helicobacter pylori (strain J99 / ATCC 700824) (Campylobacter pylori J99).